The following is a 77-amino-acid chain: DNA-directed RNA polymerase subunit epsilon (77 aa).

It belongs to the RNA polymerase subunit epsilon family. As to quaternary structure, RNAP is composed of a core of 2 alpha, a beta and a beta' subunit. The core is associated with a delta subunit, and at least one of epsilon or omega. When a sigma factor is associated with the core the holoenzyme is formed, which can initiate transcription.

It carries out the reaction RNA(n) + a ribonucleoside 5'-triphosphate = RNA(n+1) + diphosphate. A non-essential component of RNA polymerase (RNAP). The protein is DNA-directed RNA polymerase subunit epsilon of Streptococcus pneumoniae serotype 19F (strain G54).